Consider the following 335-residue polypeptide: Selenide, water dikinase (335 aa).

Sec-7 is a catalytic residue. Sec-7 is a non-standard amino acid (selenocysteine). ATP-binding positions include Lys-10 and 36 to 38 (LGD). Asp-39 serves as a coordination point for Mg(2+). Residues Asp-55, Asp-78, and 126 to 128 (GHT) contribute to the ATP site. Asp-78 provides a ligand contact to Mg(2+). Residue Asp-232 participates in Mg(2+) binding.

The protein belongs to the selenophosphate synthase 1 family. Class I subfamily. In terms of assembly, homodimer. Requires Mg(2+) as cofactor.

It catalyses the reaction hydrogenselenide + ATP + H2O = selenophosphate + AMP + phosphate + 2 H(+). Synthesizes selenophosphate from selenide and ATP. The chain is Selenide, water dikinase from Methanococcus maripaludis (strain DSM 14266 / JCM 13030 / NBRC 101832 / S2 / LL).